The primary structure comprises 484 residues: Replication-associated protein (484 aa).

Positions isoleucine 146–valine 153 match the Nuclear localization signal motif.

It localises to the host nucleus. Plays an essential for the replication of viral DNA. Presumably cleaves viral genomic dsRNA replicative form to initiate rolling circle replication. In Chaetoceros (Chaetoceros sp. DNA virus 7), this protein is Replication-associated protein.